Consider the following 638-residue polypeptide: Threonine--tRNA ligase (638 aa).

One can recognise a TGS domain in the interval 1–61 (MPNIKLPDGS…ERDSELAILT (61 aa)). Residues 242-533 (DHRKLGRQLD…LIEHYAGAMP (292 aa)) form a catalytic region. The Zn(2+) site is built by Cys-333, His-384, and His-510.

This sequence belongs to the class-II aminoacyl-tRNA synthetase family. Homodimer. Requires Zn(2+) as cofactor.

The protein localises to the cytoplasm. It catalyses the reaction tRNA(Thr) + L-threonine + ATP = L-threonyl-tRNA(Thr) + AMP + diphosphate + H(+). In terms of biological role, catalyzes the attachment of threonine to tRNA(Thr) in a two-step reaction: L-threonine is first activated by ATP to form Thr-AMP and then transferred to the acceptor end of tRNA(Thr). Also edits incorrectly charged L-seryl-tRNA(Thr). The protein is Threonine--tRNA ligase of Azoarcus sp. (strain BH72).